The sequence spans 249 residues: 3alpha-hydroxy bile acid-CoA-ester 3-dehydrogenase 2 (249 aa).

NAD(+) contacts are provided by residues 15–18 (TRGI), Glu38, Glu42, and Asn92. Substrate is bound at residue Ser144. Catalysis depends on proton donor/acceptor residues Tyr157 and Lys161. NAD(+) is bound by residues Lys161 and 190–192 (VNT).

It belongs to the short-chain dehydrogenases/reductases (SDR) family. In terms of assembly, homotetramer.

It catalyses the reaction a 3alpha-hydroxy bile acid CoA + NAD(+) = a 3-oxo bile acid CoA + NADH + H(+). It carries out the reaction choloyl-CoA + NAD(+) = 7alpha,12alpha-dihydroxy-3-oxochol-24-oyl-CoA + NADH + H(+). The enzyme catalyses chenodeoxycholoyl-CoA + NAD(+) = 7alpha-hydroxy-3-oxochol-24-oyl-CoA + NADH + H(+). The catalysed reaction is deoxycholoyl-CoA + NAD(+) = 12alpha-hydroxy-3-oxocholan-24-oyl-CoA + NADH + H(+). It catalyses the reaction lithocholoyl-CoA + NAD(+) = 3-oxocholan-24-oyl-CoA + NADH + H(+). Its pathway is lipid metabolism; bile acid biosynthesis. In terms of biological role, involved in the multi-step bile acid 7alpha-dehydroxylation pathway that transforms primary bile acids to secondary bile acids in the human gut. Catalyzes the oxidation of C3-hydroxyl group of CoA conjugated bile acids generating a C3-oxo bile acid intermediate. Can use choloyl-CoA, chenodeoxycholoyl-CoA, deoxycholoyl-CoA, and lithocholoyl-CoA as substrates with similar efficiency. Highly prefers NAD over NADP as cosubstrate. Also catalyzes the reverse reactions; in vitro, the preferred direction of reaction depends on the pH. Has very little activity with unconjugated (non-CoA) bile acid substrates. The protein is 3alpha-hydroxy bile acid-CoA-ester 3-dehydrogenase 2 (baiA2) of Clostridium scindens (strain JCM 10418 / VPI 12708).